The primary structure comprises 416 residues: MFSSQDTLAKVDPELWSAIQAENRRQEDHIELIASENYVSHAVMEAQGSQLTNKYAEGYPGKRYYGGCEHVDVVEQLAIDRLKKLFGADAANVQPNSGSQANQAVLMAFAKPGDTIMGMSLAEGGHLTHGMPLNMSGKWFNVVAYGLDEKEEINYAAMEALAREHKPKIIIAGASAYALRIDFERFARIAREVGAIFWVDMAHYAGLIAAGYYPNPVPHADVVTSTTHKTLRGPRGGIILMKAEHEKAINSAIFPGLQGGPLEHVIAAKAVAFKEAATPAFRDYQEQVIANARVMARVLGEERGLRIVSGRTESHVFLVDLRSKNITGKEAEAVLGSAHITVNKNSIPNDPQKPFVTSGIRIGSPAMTTRGFTEIEAEQIAHLIADVLDAPQDAAVLERVRGKVGELCAKFPVYGS.

(6S)-5,6,7,8-tetrahydrofolate is bound by residues L121 and G125–L127. Position 229 is an N6-(pyridoxal phosphate)lysine (K229).

It belongs to the SHMT family. Homodimer. Pyridoxal 5'-phosphate is required as a cofactor.

The protein localises to the cytoplasm. The enzyme catalyses (6R)-5,10-methylene-5,6,7,8-tetrahydrofolate + glycine + H2O = (6S)-5,6,7,8-tetrahydrofolate + L-serine. Its pathway is one-carbon metabolism; tetrahydrofolate interconversion. It participates in amino-acid biosynthesis; glycine biosynthesis; glycine from L-serine: step 1/1. In terms of biological role, catalyzes the reversible interconversion of serine and glycine with tetrahydrofolate (THF) serving as the one-carbon carrier. This reaction serves as the major source of one-carbon groups required for the biosynthesis of purines, thymidylate, methionine, and other important biomolecules. Also exhibits THF-independent aldolase activity toward beta-hydroxyamino acids, producing glycine and aldehydes, via a retro-aldol mechanism. The polypeptide is Serine hydroxymethyltransferase (Azoarcus sp. (strain BH72)).